We begin with the raw amino-acid sequence, 433 residues long: Adenylosuccinate synthetase (433 aa).

Residues 11 to 17 (GDEGKGK) and 39 to 41 (GHT) contribute to the GTP site. The active-site Proton acceptor is the Asp-12. Mg(2+)-binding residues include Asp-12 and Gly-39. IMP-binding positions include 12 to 15 (DEGK), 37 to 40 (NAGH), Thr-134, Arg-148, Asn-230, Thr-245, and Arg-309. The active-site Proton donor is the His-40. Substrate is bound at residue 305-311 (VTTGRKR). Residues Arg-311, 337–339 (KLD), and 419–421 (GTG) each bind GTP.

It belongs to the adenylosuccinate synthetase family. Homodimer. Mg(2+) is required as a cofactor.

It is found in the cytoplasm. The enzyme catalyses IMP + L-aspartate + GTP = N(6)-(1,2-dicarboxyethyl)-AMP + GDP + phosphate + 2 H(+). The protein operates within purine metabolism; AMP biosynthesis via de novo pathway; AMP from IMP: step 1/2. In terms of biological role, plays an important role in the de novo pathway and in the salvage pathway of purine nucleotide biosynthesis. Catalyzes the first committed step in the biosynthesis of AMP from IMP. The protein is Adenylosuccinate synthetase of Saccharomyces cerevisiae (strain Lalvin EC1118 / Prise de mousse) (Baker's yeast).